Here is a 198-residue protein sequence, read N- to C-terminus: Recombination protein RecR (198 aa).

The C4-type zinc-finger motif lies at 57 to 72 (CSVCGHITDRDPCYIC). The Toprim domain occupies 80 to 175 (SVVCVVQEPK…KVTRIAHGLP (96 aa)).

This sequence belongs to the RecR family.

May play a role in DNA repair. It seems to be involved in an RecBC-independent recombinational process of DNA repair. It may act with RecF and RecO. This chain is Recombination protein RecR, found in Bacillus anthracis (strain A0248).